We begin with the raw amino-acid sequence, 552 residues long: MAGGDGMLRRLLRLHRTEIAVAIDSAFPLLHALADHDVVPEDKFQETLRLKEKEGCPQAFHALLSWLLTRDSGAILDFWRILFKDYNLERYSRLHSILDGFPKDVDLNQSRKGRKPLAGPKAAVLPPRPPTKRKALEEPRATPPATLASKSVSSPGSHLKTKPPKKPDGNLESQHLPLGNGIQTMAASVQRAVTVASGDVPGTRGAVEGILIQQVFESGRSKKCIQVGGEFYTPNKFEDPSGNLKNKARSGSSLKPVVRAKGAQVTIPGRDEQKVGQQCGVPPLPSLPSEPQVNQKNEDECAVCHDGGELICCDGCPRAFHLACLSPPLQEIPSGLWRCSCCLQGRVQQNLSQPEVSRPPELPAETPILVGLRSASEKTRGPSRELKASSDAAVTYVNLLAPHPAAPLLEPSALCPLLSAGNEGRPGPAPSARCSVCGDGTEVLRCAHCAAAFHWRCHFPTAAARPGTNLRCKSCSADSTPTPGTPGEAVPTSGPRPAPGLAKVGDDSASHDPVLHRDDLESLLNEHSFDGILQWAIQSMSRPLAETPPFSS.

Residues 1–106 (MAGGDGMLRR…ILDGFPKDVD (106 aa)) form the HSR domain. 2 short sequence motifs (LXXLL motif) span residues 8–12 (LRRLL) and 64–68 (LSWLL). The interval 109-177 (QSRKGRKPLA…DGNLESQHLP (69 aa)) is disordered. The short motif at 114 to 134 (RKPLAGPKAAVLPPRPPTKRK) is the Nuclear localization signal element. In terms of domain architecture, SAND spans 182 to 282 (IQTMAASVQR…QKVGQQCGVP (101 aa)). The PHD-type 1 zinc finger occupies 298–345 (EDECAVCHDGGELICCDGCPRAFHLACLSPPLQEIPSGLWRCSCCLQG). Positions 414–418 (LCPLL) match the LXXLL motif 3 motif. Residues 434-475 (CSVCGDGTEVLRCAHCAAAFHWRCHFPTAAARPGTNLRCKSC) form a PHD-type 2 zinc finger. The tract at residues 472-514 (CKSCSADSTPTPGTPGEAVPTSGPRPAPGLAKVGDDSASHDPV) is disordered. Basic and acidic residues predominate over residues 504–514 (VGDDSASHDPV). The LXXLL motif 4 motif lies at 520 to 524 (LESLL).

As to quaternary structure, homodimer and homotetramer. Interacts with CREBBP. Interacts preferentially with histone H3 that is not methylated at 'Lys-4'. Binds with lower affinity to histone H3 that is monomethylated at 'Lys-4'. Trimethylation of histone H3 at 'Lys-4' or phosphorylation at 'Thr-3' abolish the interaction. Binds with lower affinity to histone H3 that is acetylated at 'Lys-4', or that is acetylated at 'Lys-9' or trimethylated at 'Lys-9'. Binds histone H3 that is dimethylated at 'Arg-2' with very low affinity. In terms of processing, phosphorylated. In terms of tissue distribution, highly expressed in a few cells in the medulla of the thymus (medullary epithelial cells) (at protein level). Expressed in thymic but no peripheral B-cells. In secondary lymphoid organs, expressed in a discrete population of bone marrow-derived toleregenic antigen presenting cells (APCs) called extrathymic AIRE expressing cells (eTAC)(at protein level). Detected at very low levels in thymus, lymph node, liver, brain, ovary, lung, testis, kidney, heart, spleen, bone marrow, skeletal muscle and adrenal gland. Isoforms 1a to 1d predominate, isoforms 2a to 2d are intermediate and isoforms 3a to 3d are expressed at extremely low levels.

The protein localises to the nucleus. Its subcellular location is the cytoplasm. Transcription factor playing an essential role to promote self-tolerance in the thymus by regulating the expression of a wide array of self-antigens that have the commonality of being tissue-restricted in their expression pattern in the periphery, called tissue restricted antigens (TRA). Binds to G-doublets in an A/T-rich environment; the preferred motif is a tandem repeat of 5'-. ATTGGTTA-3' combined with a 5'-TTATTA-3' box. Binds to nucleosomes. Binds to chromatin and interacts selectively with histone H3 that is not methylated at 'Lys-4', not phosphorylated at 'Thr-3' and not methylated at 'Arg-2'. Functions as a sensor of histone H3 modifications that are important for the epigenetic regulation of gene expression. Mainly expressed by medullary thymic epithelial cells (mTECs), induces the expression of thousands of tissue-restricted proteins, which are presented on major histocompatibility complex class I (MHC-I) and MHC-II molecules to developing T-cells percolating through the thymic medulla. Also induces self-tolerance through other mechanisms such as the regulation of the mTEC differentiation program. Controls the medullary accumulation of thymic dendritic cells and the development of regulatory T-cell through the regulation of XCL1 expression. Regulates the production of CCR4 and CCR7 ligands in medullary thymic epithelial cells and alters the coordinated maturation and migration of thymocytes. In thimic B-cells, allows the presentation of licensing-dependent endogenous self-anitgen for negative selection. In secondary lymphoid organs, induces functional inactivation of CD4(+) T-cells. Expressed by a distinct bone marrow-derived population, induces self-tolerance through a mechanism that does not require regulatory T-cells and is resitant to innate inflammatory stimuli. In Mus musculus (Mouse), this protein is Autoimmune regulator (Aire).